The primary structure comprises 851 residues: Leucine--tRNA ligase (851 aa).

The 'HIGH' region signature appears at 51–61 (PYPSGDLHMGH). Residues 615-619 (KMSKS) carry the 'KMSKS' region motif. K618 lines the ATP pocket.

Belongs to the class-I aminoacyl-tRNA synthetase family.

Its subcellular location is the cytoplasm. It catalyses the reaction tRNA(Leu) + L-leucine + ATP = L-leucyl-tRNA(Leu) + AMP + diphosphate. This chain is Leucine--tRNA ligase, found in Clavibacter michiganensis subsp. michiganensis (strain NCPPB 382).